A 142-amino-acid polypeptide reads, in one-letter code: Large ribosomal subunit protein uL13 (142 aa).

The protein belongs to the universal ribosomal protein uL13 family. Part of the 50S ribosomal subunit.

In terms of biological role, this protein is one of the early assembly proteins of the 50S ribosomal subunit, although it is not seen to bind rRNA by itself. It is important during the early stages of 50S assembly. The chain is Large ribosomal subunit protein uL13 from Vibrio atlanticus (strain LGP32) (Vibrio splendidus (strain Mel32)).